The chain runs to 364 residues: DNA replication and repair protein RecF (364 aa).

Gly30–Thr37 contributes to the ATP binding site.

It belongs to the RecF family.

The protein localises to the cytoplasm. Its function is as follows. The RecF protein is involved in DNA metabolism; it is required for DNA replication and normal SOS inducibility. RecF binds preferentially to single-stranded, linear DNA. It also seems to bind ATP. This is DNA replication and repair protein RecF from Porphyromonas gingivalis (strain ATCC BAA-308 / W83).